Consider the following 207-residue polypeptide: Holliday junction branch migration complex subunit RuvA (207 aa).

Residues 1 to 64 are domain I; the sequence is MIGRLRGNLL…EDAQLLYGFN (64 aa). Residues 65–143 are domain II; it reads TKNERALFRE…GWGAGDLFTP (79 aa). The segment at 144-158 is flexible linker; that stretch reads ATDAAPMDDGSEFIT. A domain III region spans residues 159–207; it reads SPQSAVDEAVSALIALGYKPQQASKTVSQVAKPDMTSEVLIRESLKSMI.

It belongs to the RuvA family. In terms of assembly, homotetramer. Forms an RuvA(8)-RuvB(12)-Holliday junction (HJ) complex. HJ DNA is sandwiched between 2 RuvA tetramers; dsDNA enters through RuvA and exits via RuvB. An RuvB hexamer assembles on each DNA strand where it exits the tetramer. Each RuvB hexamer is contacted by two RuvA subunits (via domain III) on 2 adjacent RuvB subunits; this complex drives branch migration. In the full resolvosome a probable DNA-RuvA(4)-RuvB(12)-RuvC(2) complex forms which resolves the HJ.

It is found in the cytoplasm. In terms of biological role, the RuvA-RuvB-RuvC complex processes Holliday junction (HJ) DNA during genetic recombination and DNA repair, while the RuvA-RuvB complex plays an important role in the rescue of blocked DNA replication forks via replication fork reversal (RFR). RuvA specifically binds to HJ cruciform DNA, conferring on it an open structure. The RuvB hexamer acts as an ATP-dependent pump, pulling dsDNA into and through the RuvAB complex. HJ branch migration allows RuvC to scan DNA until it finds its consensus sequence, where it cleaves and resolves the cruciform DNA. This Aliivibrio fischeri (strain MJ11) (Vibrio fischeri) protein is Holliday junction branch migration complex subunit RuvA.